Here is a 430-residue protein sequence, read N- to C-terminus: Glutamate-1-semialdehyde 2,1-aminomutase (430 aa).

Position 267 is an N6-(pyridoxal phosphate)lysine (Lys267).

The protein belongs to the class-III pyridoxal-phosphate-dependent aminotransferase family. HemL subfamily. As to quaternary structure, homodimer. Pyridoxal 5'-phosphate is required as a cofactor.

The protein resides in the cytoplasm. The enzyme catalyses (S)-4-amino-5-oxopentanoate = 5-aminolevulinate. Its pathway is porphyrin-containing compound metabolism; protoporphyrin-IX biosynthesis; 5-aminolevulinate from L-glutamyl-tRNA(Glu): step 2/2. The sequence is that of Glutamate-1-semialdehyde 2,1-aminomutase from Desulfotalea psychrophila (strain LSv54 / DSM 12343).